We begin with the raw amino-acid sequence, 160 residues long: MGVFTYETEFTSVIPPPRLFKAFILDADNLIPKIAPQAVKCAEIIEGDGGVGTIKKITFGEGSQFGSVTHKIDGIDKDNFAYSYSLVEGDALSDKIEKISYETKLVASSDGGSVIKSTSNYHTKGDVEIKEEHVKAGKEKASHLFKLVEDYLLANPNEYC.

Belongs to the BetVI family. In terms of processing, phosphorylated in vivo. Phosphorylation prevents its activity as ribonuclease. As to expression, highly expressed in roots. Expressed a low levels in ripe red fruits.

Functionally, possesses ribonuclease activity in vitro. The sequence is that of Major strawberry allergen Fra a 1.04 from Fragaria ananassa (Strawberry).